The primary structure comprises 199 residues: ATP synthase subunit a (199 aa).

6 helical membrane-spanning segments follow: residues Thr2–Phe22, Ser25–Thr45, Val53–Tyr73, Met80–Ile100, Val143–Leu163, and Gly164–Ile184.

The protein belongs to the ATPase A chain family. In terms of assembly, F-type ATPases have 2 components, CF(1) - the catalytic core - and CF(0) - the membrane proton channel. CF(1) has five subunits: alpha(3), beta(3), gamma(1), delta(1), epsilon(1). CF(0) has three main subunits: a, b and c.

It is found in the mitochondrion inner membrane. Mitochondrial membrane ATP synthase (F(1)F(0) ATP synthase or Complex V) produces ATP from ADP in the presence of a proton gradient across the membrane which is generated by electron transport complexes of the respiratory chain. F-type ATPases consist of two structural domains, F(1) - containing the extramembraneous catalytic core and F(0) - containing the membrane proton channel, linked together by a central stalk and a peripheral stalk. During catalysis, ATP synthesis in the catalytic domain of F(1) is coupled via a rotary mechanism of the central stalk subunits to proton translocation. Key component of the proton channel; it may play a direct role in the translocation of protons across the membrane. This is ATP synthase subunit a (ATP6) from Ascaris suum (Pig roundworm).